The primary structure comprises 651 residues: BTB/POZ domain-containing protein At3g44820 (651 aa).

The BTB domain occupies 25–96 (SDITVVVDDV…CYGARVDITS (72 aa)). Positions 211-509 (DWWYEDISYL…LQVLFFEQMH (299 aa)) constitute an NPH3 domain. A disordered region spans residues 611 to 651 (DAKNDTVQNSVSSTPRSATADHTLPRSSRHSKHRKSFSFFG). Positions 615-627 (DTVQNSVSSTPRS) are enriched in polar residues. A compositionally biased stretch (basic residues) spans 637–651 (SSRHSKHRKSFSFFG).

It belongs to the NPH3 family.

It functions in the pathway protein modification; protein ubiquitination. Functionally, may act as a substrate-specific adapter of an E3 ubiquitin-protein ligase complex (CUL3-RBX1-BTB) which mediates the ubiquitination and subsequent proteasomal degradation of target proteins. The polypeptide is BTB/POZ domain-containing protein At3g44820 (Arabidopsis thaliana (Mouse-ear cress)).